A 498-amino-acid chain; its full sequence is Glycerol kinase (498 aa).

Thr-12 contacts ADP. Positions 12, 13, and 14 each coordinate ATP. A sn-glycerol 3-phosphate-binding site is contributed by Thr-12. Arg-16 contacts ADP. Residues Arg-82, Glu-83, Tyr-134, and Asp-241 each coordinate sn-glycerol 3-phosphate. Arg-82, Glu-83, Tyr-134, Asp-241, and Gln-242 together coordinate glycerol. 2 residues coordinate ADP: Thr-263 and Gly-310. ATP contacts are provided by Thr-263, Gly-310, Gln-314, and Gly-411. 2 residues coordinate ADP: Gly-411 and Asn-415.

It belongs to the FGGY kinase family.

It catalyses the reaction glycerol + ATP = sn-glycerol 3-phosphate + ADP + H(+). It functions in the pathway polyol metabolism; glycerol degradation via glycerol kinase pathway; sn-glycerol 3-phosphate from glycerol: step 1/1. Its activity is regulated as follows. Inhibited by fructose 1,6-bisphosphate (FBP). In terms of biological role, key enzyme in the regulation of glycerol uptake and metabolism. Catalyzes the phosphorylation of glycerol to yield sn-glycerol 3-phosphate. This Herminiimonas arsenicoxydans protein is Glycerol kinase.